The following is a 539-amino-acid chain: MYGGDEYANNSEYYDDYAHTGDPQLDMEYERNYYAARMPDNVKYFLINFCQAIKEGNLYDIQNMYENTFPQISDHHFDKTAWPEEQEVAAIVDNDKVFLILYKELYYRHIHARISGGPKLEQRINSFFNYCDFFNLIISAQNPVMLELPDIWLWELVDEFVYQFQNFAQYRARLTDKSQDEIQQLCVNHSNEWSILCILNVLHSLVDISNIKKQLEAISQGSDPQTVAGDFGKLSFYKMLGYFSLVGLLRVHSLLGDYYQAIKVLEPIEIHKKSAYSHIPACQISTSYYVGFAYMMMRRYADAIRTFSDILLYIQRTKQLYSTRSYQNDQINKQAEQMYHLLAICLVLHPQCIDESIQQVLREKNYHDAMFKMQCGDLEVFKSFFVFACPRFVSPCPPAADAPMEDYVKDPMEHQLLVFMDEVRQQKDLPTTRSYLKLYTTLPLTKLASFIDPNASEDDVSKLLIRLLCFKHKMRNLVWSKGPSGLEGTFKSGSELDFYIDDDMIHIADTKVSHRYGDFFVRKILKFNDLNRKLKNINI.

The PCI domain occupies 306-514; it reads TFSDILLYIQ…IHIADTKVSH (209 aa).

Belongs to the eIF-3 subunit L family. As to quaternary structure, component of the eukaryotic translation initiation factor 3 (eIF-3) complex. The eIF-3 complex interacts with pix.

The protein resides in the cytoplasm. Its function is as follows. Component of the eukaryotic translation initiation factor 3 (eIF-3) complex, which is involved in protein synthesis of a specialized repertoire of mRNAs and, together with other initiation factors, stimulates binding of mRNA and methionyl-tRNAi to the 40S ribosome. The eIF-3 complex specifically targets and initiates translation of a subset of mRNAs involved in cell proliferation. The chain is Eukaryotic translation initiation factor 3 subunit L from Drosophila yakuba (Fruit fly).